Here is a 399-residue protein sequence, read N- to C-terminus: Carbamoyl phosphate synthase small chain (399 aa).

The interval M1 to S209 is CPSase. Positions 55, 261, and 263 each coordinate L-glutamine. A Glutamine amidotransferase type-1 domain is found at R213–S399. Residue C289 is the Nucleophile of the active site. Residues L290, Q293, N329, G331, and F332 each coordinate L-glutamine. Active-site residues include H372 and E374.

It belongs to the CarA family. Composed of two chains; the small (or glutamine) chain promotes the hydrolysis of glutamine to ammonia, which is used by the large (or ammonia) chain to synthesize carbamoyl phosphate. Tetramer of heterodimers (alpha,beta)4.

It localises to the plastid. The protein resides in the chloroplast. The enzyme catalyses hydrogencarbonate + L-glutamine + 2 ATP + H2O = carbamoyl phosphate + L-glutamate + 2 ADP + phosphate + 2 H(+). It carries out the reaction L-glutamine + H2O = L-glutamate + NH4(+). It participates in amino-acid biosynthesis; L-arginine biosynthesis; carbamoyl phosphate from bicarbonate: step 1/1. Its pathway is pyrimidine metabolism; UMP biosynthesis via de novo pathway; (S)-dihydroorotate from bicarbonate: step 1/3. Small subunit of the glutamine-dependent carbamoyl phosphate synthetase (CPSase). CPSase catalyzes the formation of carbamoyl phosphate from the ammonia moiety of glutamine, carbonate, and phosphate donated by ATP, constituting the first step of 2 biosynthetic pathways, one leading to arginine and/or urea and the other to pyrimidine nucleotides. The small subunit (glutamine amidotransferase) binds and cleaves glutamine to supply the large subunit with the substrate ammonia. The chain is Carbamoyl phosphate synthase small chain from Cyanidium caldarium (Red alga).